The chain runs to 639 residues: Chaperone protein DnaK (639 aa).

A Phosphothreonine; by autocatalysis modification is found at Thr-198. Positions 603–618 (AKAQTQGGAQEGAAKQ) are enriched in low complexity. Residues 603–639 (AKAQTQGGAQEGAAKQSNATADDVVDAEFEEVKDDKK) are disordered. The segment covering 625–639 (DVVDAEFEEVKDDKK) has biased composition (acidic residues).

Belongs to the heat shock protein 70 family.

Acts as a chaperone. This Shewanella sp. (strain MR-7) protein is Chaperone protein DnaK.